Reading from the N-terminus, the 184-residue chain is Ribosome maturation factor RimP (184 aa).

This sequence belongs to the RimP family.

The protein localises to the cytoplasm. Functionally, required for maturation of 30S ribosomal subunits. The polypeptide is Ribosome maturation factor RimP (Corynebacterium diphtheriae (strain ATCC 700971 / NCTC 13129 / Biotype gravis)).